A 223-amino-acid chain; its full sequence is Golgi to ER traffic protein 1 (223 aa).

Residue Met-1 is a topological domain, lumenal. A helical transmembrane segment spans residues 2 to 21 (SWVVAIAVVFVVVLKVLEYS). Residues 22–105 (TSYHDLVLQS…QIKGHLKKVK (84 aa)) are Cytoplasmic-facing. Residues 56 to 105 (ENKSISAQDNYAKWTKNNRKLDKLDKEITELGAQLKAHNEQIKGHLKKVK) adopt a coiled-coil conformation. A helical transmembrane segment spans residues 106 to 126 (LLLLTVPFLCFKLWKGKHIVY). Over 127 to 177 (NLPHHQMFPQLVAGVWSQGWLYLAILPLQLAKSIVTGSSFAIETASFPHMG) the chain is Lumenal. A helical membrane pass occupies residues 178–194 (VSLGIWLWALNSVISNI). Topologically, residues 195-223 (EFMTMQLWAKPVSKPSKKLEIVTDEIKVD) are cytoplasmic.

This sequence belongs to the WRB/GET1 family. Component of the Golgi to ER traffic (GET) complex, which is composed of GET1, GET2 and GET3. Within the complex, GET1 and GET2 form a heterotetramer which is stabilized by phosphatidylinositol binding and which binds to the GET3 homodimer.

The protein resides in the endoplasmic reticulum membrane. It is found in the golgi apparatus membrane. Its function is as follows. Required for the post-translational delivery of tail-anchored (TA) proteins to the endoplasmic reticulum. Together with GET2, acts as a membrane receptor for soluble GET3, which recognizes and selectively binds the transmembrane domain of TA proteins in the cytosol. The GET complex cooperates with the HDEL receptor ERD2 to mediate the ATP-dependent retrieval of resident ER proteins that contain a C-terminal H-D-E-L retention signal from the Golgi to the ER. This chain is Golgi to ER traffic protein 1, found in Candida glabrata (strain ATCC 2001 / BCRC 20586 / JCM 3761 / NBRC 0622 / NRRL Y-65 / CBS 138) (Yeast).